The chain runs to 248 residues: Functional amyloid sbunit FapE (248 aa).

An N-terminal signal peptide occupies residues 1–20; the sequence is MNTSRWLTALCLAASMPAYA.

This sequence belongs to the FapE family. In terms of assembly, a minor component of purified amyloid fibrils. Fibrils are resistant to boiling in 2% (weight/vol) SDS and require &gt;90% (vol/vol) formic acid to dissolve.

The protein resides in the fimbrium. It is found in the secreted. Its function is as follows. A minor component of the functional amyloid in this bacterium. Upon overexpression of the endogenous six-gene locus (fapA-fapF) in situ, cells form large clumps during liquid growth, make large amounts of biofilm and produce amyloid fibrils. Expression of the 6 gene operon in E.coli strain BL21(DE3) induces flocculation and biofilm formation with copious extracellular fibrils. In Pseudomonas fluorescens, this protein is Functional amyloid sbunit FapE.